The sequence spans 466 residues: MEKKPFTPREIVEKLDQYIIGQLDAKKAVAVALRNRYRRSLLHDKLKDEVVPKNILMIGPTGVGKTEIARRIAKISGAPFIKVEATKFTEVGYVGRDVESMVRDLVETAIRIVKEDKMKDVQEEAEKQANKRLVHLLVPGKKKSQSVKNPFEMLFGGSDEDDRDRDQSSEEVELESTRKRIAHQLAMGELEDHYVTIEVEEQQPSMFDMLQGSGMEQMGMNMQDALGNLMPKKKKRRKLTVREARKALTAEEASKLIDMDEVSQEAVYKAEQQGIIFIDEIDKIAKSGGASSADVSREGVQRDILPIVEGSTVMTKYGAVKTDHVLFVAAGAFHMAKPSDLIPELQGRFPIRVELDKLSIEDFVKILTEPDNALLKQYKALLETEGISLEFSDDAIHKIAEVAYHVNQETDNIGARRLHTILEKLLEELSFEAPDITLGTVTITPQYVEEKLGKIANNKDLSQFIL.

ATP contacts are provided by residues Ile-20 and 62 to 67 (GVGKTE). The disordered stretch occupies residues 153-177 (MLFGGSDEDDRDRDQSSEEVELEST). Acidic residues predominate over residues 158-174 (SDEDDRDRDQSSEEVEL). The ATP site is built by Asp-279, Glu-344, and Arg-416.

Belongs to the ClpX chaperone family. HslU subfamily. As to quaternary structure, a double ring-shaped homohexamer of ClpQ is capped on each side by a ring-shaped ClpY homohexamer. The assembly of the ClpQ/ClpY complex is dependent on binding of ATP.

Its subcellular location is the cytoplasm. In terms of biological role, ATPase subunit of a proteasome-like degradation complex; this subunit has chaperone activity. The chain is ATP-dependent protease ATPase subunit ClpY (clpY) from Bacillus pumilus (strain SAFR-032).